A 64-amino-acid polypeptide reads, in one-letter code: Large ribosomal subunit protein bL35 (64 aa).

2 disordered regions span residues methionine 1–isoleucine 22 and glutamate 34–glycine 64. Residues glutamate 34–threonine 48 are compositionally biased toward basic and acidic residues. Residues valine 50–glycine 64 show a composition bias toward polar residues.

Belongs to the bacterial ribosomal protein bL35 family.

The protein is Large ribosomal subunit protein bL35 of Mycobacterium leprae (strain Br4923).